The sequence spans 373 residues: GDSL esterase/lipase LIP-4 (373 aa).

An N-terminal signal peptide occupies residues 1–32; sequence MATLFLYSNTFSFFFITLVSLALLILRQPSRA. Ser47 (nucleophile) is an active-site residue. A glycan (N-linked (GlcNAc...) asparagine) is linked at Asn93. Catalysis depends on residues Asp339 and His342.

It belongs to the 'GDSL' lipolytic enzyme family.

It localises to the secreted. This is GDSL esterase/lipase LIP-4 (LIP4) from Arabidopsis thaliana (Mouse-ear cress).